A 116-amino-acid chain; its full sequence is Mitochondrial import inner membrane translocase subunit PAM16 like 2 (116 aa).

Residues 1 to 27 (MAGRLLANLIVMGSGIIGRAVFQAYRQ) constitute a mitochondrion transit peptide. The tract at residues 57 to 106 (EARQILGVTEKTSWEEILQKYDKLFENNAKAGSFYLQSKVHRAKECLEVV) is J-like.

This sequence belongs to the TIM16/PAM16 family. Expressed constitutively and ubiquitously, except in root tips, at low levels.

Its subcellular location is the mitochondrion inner membrane. The protein localises to the cytoplasm. In terms of biological role, regulates ATP-dependent protein translocation into the mitochondrial matrix. Involved in the uptake of thaxtomin, a phytotoxin produced by Streptomyces bacteria, that causes dramatic cell swelling, reduced seedling growth, and inhibition of cellulose synthesis. Modulates polar auxin transport. Involved in importing a negative regulator of plant immunity into mitochondria, thus protecting plants from over-accumulation of reactive oxygen species (ROS) and preventing autoimmunity. Confers sensitivity to virulent pathogens such as the oomycete H.arabidopsidis Noco2 and the bacteria P.syringae pv. maculicola ES4326. The polypeptide is Mitochondrial import inner membrane translocase subunit PAM16 like 2 (Arabidopsis thaliana (Mouse-ear cress)).